Here is a 149-residue protein sequence, read N- to C-terminus: Deoxyuridine 5'-triphosphate nucleotidohydrolase (149 aa).

Substrate-binding positions include 68–70, Asn81, and 85–87; these read RSG and LID.

It belongs to the dUTPase family. The cofactor is Mg(2+).

The enzyme catalyses dUTP + H2O = dUMP + diphosphate + H(+). It participates in pyrimidine metabolism; dUMP biosynthesis; dUMP from dCTP (dUTP route): step 2/2. In terms of biological role, this enzyme is involved in nucleotide metabolism: it produces dUMP, the immediate precursor of thymidine nucleotides and it decreases the intracellular concentration of dUTP so that uracil cannot be incorporated into DNA. This Nitrosospira multiformis (strain ATCC 25196 / NCIMB 11849 / C 71) protein is Deoxyuridine 5'-triphosphate nucleotidohydrolase.